The following is a 283-amino-acid chain: MTLRQALGEAVRRLAAGGVERPRLEAEVLLGWACSLTRPRLLARLEEELAPAAAGRFWQAIDRRAAGYPLQYLTGHQEFMSLDFKVTPAVLIPRQDTEVVVEAVLERLDPCESYTIADCGTGSGAIALSLAHYLPRARVYATDISPAALTVAQENARKLGLAARVTLLQGDFLAPLRGLKLDALVANPPYIPTAALPGLPADVRSEPRLALDGGPDGLDAYRFLLPGAAGLLRPGGLLALEIGSDQGQAVKDLARAVGAYRNEQVLPDYAGRDRCFLAYRREE.

Residues 120–124, Asp-143, Phe-172, and Asn-187 contribute to the S-adenosyl-L-methionine site; that span reads GTGSG. 187-190 serves as a coordination point for substrate; sequence NPPY.

The protein belongs to the protein N5-glutamine methyltransferase family. PrmC subfamily.

The catalysed reaction is L-glutaminyl-[peptide chain release factor] + S-adenosyl-L-methionine = N(5)-methyl-L-glutaminyl-[peptide chain release factor] + S-adenosyl-L-homocysteine + H(+). Its function is as follows. Methylates the class 1 translation termination release factors RF1/PrfA and RF2/PrfB on the glutamine residue of the universally conserved GGQ motif. In Moorella thermoacetica (strain ATCC 39073 / JCM 9320), this protein is Release factor glutamine methyltransferase.